The following is a 150-amino-acid chain: Urease subunit beta (150 aa).

Low complexity predominate over residues 122 to 140 (GAVVGDSPAATPGTTGATG). The segment at 122-150 (GAVVGDSPAATPGTTGATGDLPGYLGEGS) is disordered.

The protein belongs to the urease beta subunit family. As to quaternary structure, heterotrimer of UreA (gamma), UreB (beta) and UreC (alpha) subunits. Three heterotrimers associate to form the active enzyme.

The protein resides in the cytoplasm. It carries out the reaction urea + 2 H2O + H(+) = hydrogencarbonate + 2 NH4(+). It functions in the pathway nitrogen metabolism; urea degradation; CO(2) and NH(3) from urea (urease route): step 1/1. The sequence is that of Urease subunit beta from Frankia alni (strain DSM 45986 / CECT 9034 / ACN14a).